A 581-amino-acid polypeptide reads, in one-letter code: Threonine--tRNA ligase (581 aa).

Positions 185–478 are catalytic; sequence DHRKLGKELD…LVEHYGGAFP (294 aa). Zn(2+)-binding residues include Cys-278, His-329, and His-455.

It belongs to the class-II aminoacyl-tRNA synthetase family. In terms of assembly, homodimer. The cofactor is Zn(2+).

It is found in the cytoplasm. It carries out the reaction tRNA(Thr) + L-threonine + ATP = L-threonyl-tRNA(Thr) + AMP + diphosphate + H(+). Its function is as follows. Catalyzes the attachment of threonine to tRNA(Thr) in a two-step reaction: L-threonine is first activated by ATP to form Thr-AMP and then transferred to the acceptor end of tRNA(Thr). Also edits incorrectly charged L-seryl-tRNA(Thr). The protein is Threonine--tRNA ligase of Borreliella burgdorferi (strain ATCC 35210 / DSM 4680 / CIP 102532 / B31) (Borrelia burgdorferi).